Reading from the N-terminus, the 344-residue chain is RNA 3'-terminal phosphate cyclase (344 aa).

ATP-binding positions include Gln-102 and 284-288 (FLGDQ). Catalysis depends on His-308, which acts as the Tele-AMP-histidine intermediate.

It belongs to the RNA 3'-terminal cyclase family. Type 1 subfamily.

The protein resides in the cytoplasm. It catalyses the reaction a 3'-end 3'-phospho-ribonucleotide-RNA + ATP = a 3'-end 2',3'-cyclophospho-ribonucleotide-RNA + AMP + diphosphate. Functionally, catalyzes the conversion of 3'-phosphate to a 2',3'-cyclic phosphodiester at the end of RNA. The mechanism of action of the enzyme occurs in 3 steps: (A) adenylation of the enzyme by ATP; (B) transfer of adenylate to an RNA-N3'P to produce RNA-N3'PP5'A; (C) and attack of the adjacent 2'-hydroxyl on the 3'-phosphorus in the diester linkage to produce the cyclic end product. The biological role of this enzyme is unknown but it is likely to function in some aspects of cellular RNA processing. This is RNA 3'-terminal phosphate cyclase from Thermococcus gammatolerans (strain DSM 15229 / JCM 11827 / EJ3).